The chain runs to 380 residues: MGYDLPPLREPDLPRTAKVRPVALRTGWTTGACATAAAKAALTALVTGVAPAEVEIGLPAGRRVRFPVARCDRRDEGAEAVVVKDAGDDPDVTHGAELTATVGWRPVPGLALEGGPGVGTVTKPGLGLAVGGPAINDTPRRMIGEAVAEVVDLTAVGVRVVISVPRGEIMARKTTNRRLGIVGGISILGTTGIVRPFSTASWRASVVQAVQVAAAQGERTVVLCTGGRTERGARALLPELPEVCFVEVGDFTGAAVTAAVTHGLSGVAFVGMAGKLAKLAAGVLMTHYTRSKVDLSLLGAVTAEAGGTADLATAVTAANTGRHAYELWEAAGLLGPAGDLLCSRVRAVLRRFAGDAVAVDVAMVDFTGARVVASSGRWAR.

It belongs to the CbiD family.

The enzyme catalyses Co-precorrin-5B + S-adenosyl-L-methionine = Co-precorrin-6A + S-adenosyl-L-homocysteine. It functions in the pathway cofactor biosynthesis; adenosylcobalamin biosynthesis; cob(II)yrinate a,c-diamide from sirohydrochlorin (anaerobic route): step 6/10. In terms of biological role, catalyzes the methylation of C-1 in cobalt-precorrin-5B to form cobalt-precorrin-6A. This chain is Cobalt-precorrin-5B C(1)-methyltransferase, found in Salinispora arenicola (strain CNS-205).